Here is a 188-residue protein sequence, read N- to C-terminus: Protein SSX4 (188 aa).

Residues 20–83 enclose the KRAB-related domain; it reads KLRKAFDDIA…KRAADFHGND (64 aa). Basic and acidic residues predominate over residues 116 to 127; sequence PAEEENGLKEVP. A disordered region spans residues 116–167; that stretch reads PAEEENGLKEVPEASGPQNDGKQLCPPGNPSTLEKINKTSGPKRGKHAWTHR. Residues 145-155 are compositionally biased toward polar residues; the sequence is PSTLEKINKTS. Basic residues predominate over residues 156 to 167; the sequence is GPKRGKHAWTHR.

It belongs to the SSX family.

In terms of biological role, could act as a modulator of transcription. The sequence is that of Protein SSX4 (SSX4) from Homo sapiens (Human).